The primary structure comprises 132 residues: Small ribosomal subunit protein uS11 (132 aa).

It belongs to the universal ribosomal protein uS11 family. Part of the 30S ribosomal subunit. Interacts with proteins S7 and S18. Binds to IF-3.

Its function is as follows. Located on the platform of the 30S subunit, it bridges several disparate RNA helices of the 16S rRNA. Forms part of the Shine-Dalgarno cleft in the 70S ribosome. In Legionella pneumophila (strain Corby), this protein is Small ribosomal subunit protein uS11.